A 515-amino-acid polypeptide reads, in one-letter code: Bifunctional purine biosynthesis protein PurH (515 aa).

An MGS-like domain is found at 1-145 (MTKRALISVS…KNHASVTVVV (145 aa)).

Belongs to the PurH family.

The enzyme catalyses (6R)-10-formyltetrahydrofolate + 5-amino-1-(5-phospho-beta-D-ribosyl)imidazole-4-carboxamide = 5-formamido-1-(5-phospho-D-ribosyl)imidazole-4-carboxamide + (6S)-5,6,7,8-tetrahydrofolate. It carries out the reaction IMP + H2O = 5-formamido-1-(5-phospho-D-ribosyl)imidazole-4-carboxamide. It functions in the pathway purine metabolism; IMP biosynthesis via de novo pathway; 5-formamido-1-(5-phospho-D-ribosyl)imidazole-4-carboxamide from 5-amino-1-(5-phospho-D-ribosyl)imidazole-4-carboxamide (10-formyl THF route): step 1/1. Its pathway is purine metabolism; IMP biosynthesis via de novo pathway; IMP from 5-formamido-1-(5-phospho-D-ribosyl)imidazole-4-carboxamide: step 1/1. The chain is Bifunctional purine biosynthesis protein PurH from Streptococcus gordonii (strain Challis / ATCC 35105 / BCRC 15272 / CH1 / DL1 / V288).